The chain runs to 249 residues: Isoamyl acetate-hydrolyzing esterase 1 homolog (249 aa).

The active-site Nucleophile is serine 24. Lysine 63 carries the N6-succinyllysine modification. Aspartate 197 (proton donor) is an active-site residue. The active-site Proton acceptor is the histidine 200.

It belongs to the 'GDSL' lipolytic enzyme family. IAH1 subfamily.

Probable lipase. The sequence is that of Isoamyl acetate-hydrolyzing esterase 1 homolog (Iah1) from Rattus norvegicus (Rat).